Reading from the N-terminus, the 478-residue chain is 2-succinylbenzoate--CoA ligase (478 aa).

The protein belongs to the ATP-dependent AMP-binding enzyme family. MenE subfamily.

The enzyme catalyses 2-succinylbenzoate + ATP + CoA = 2-succinylbenzoyl-CoA + AMP + diphosphate. It functions in the pathway quinol/quinone metabolism; 1,4-dihydroxy-2-naphthoate biosynthesis; 1,4-dihydroxy-2-naphthoate from chorismate: step 5/7. The protein operates within quinol/quinone metabolism; menaquinone biosynthesis. In terms of biological role, converts 2-succinylbenzoate (OSB) to 2-succinylbenzoyl-CoA (OSB-CoA). This Bacillus licheniformis (strain ATCC 14580 / DSM 13 / JCM 2505 / CCUG 7422 / NBRC 12200 / NCIMB 9375 / NCTC 10341 / NRRL NRS-1264 / Gibson 46) protein is 2-succinylbenzoate--CoA ligase.